A 473-amino-acid polypeptide reads, in one-letter code: Photosystem II CP43 reaction center protein (473 aa).

Positions 1 to 14 are excised as a propeptide; that stretch reads MKTLYSLRRFYPVE. Threonine 15 carries the N-acetylthreonine modification. Threonine 15 carries the post-translational modification Phosphothreonine. Transmembrane regions (helical) follow at residues 69–93, 134–155, 178–200, 255–275, and 291–312; these read LFEVAHFVPEKPMYEQGLILLPHLA, LLGPETLEESFPFFGYVWKDRN, KALYFGGVYDTWAPGGGDVRRIT, KPFAWARRAFVWSGEAYLSYS, and WFNNTAYPSEFYGPTGPEASQA. Residue glutamate 367 coordinates [CaMn4O5] cluster. The chain crosses the membrane as a helical span at residues 447-471; sequence RARAAAAGFEKGIDRDFEPVLFMTP.

This sequence belongs to the PsbB/PsbC family. PsbC subfamily. As to quaternary structure, PSII is composed of 1 copy each of membrane proteins PsbA, PsbB, PsbC, PsbD, PsbE, PsbF, PsbH, PsbI, PsbJ, PsbK, PsbL, PsbM, PsbT, PsbX, PsbY, PsbZ, Psb30/Ycf12, at least 3 peripheral proteins of the oxygen-evolving complex and a large number of cofactors. It forms dimeric complexes. Requires Binds multiple chlorophylls and provides some of the ligands for the Ca-4Mn-5O cluster of the oxygen-evolving complex. It may also provide a ligand for a Cl- that is required for oxygen evolution. PSII binds additional chlorophylls, carotenoids and specific lipids. as cofactor.

It localises to the plastid. It is found in the chloroplast thylakoid membrane. Its function is as follows. One of the components of the core complex of photosystem II (PSII). It binds chlorophyll and helps catalyze the primary light-induced photochemical processes of PSII. PSII is a light-driven water:plastoquinone oxidoreductase, using light energy to abstract electrons from H(2)O, generating O(2) and a proton gradient subsequently used for ATP formation. The sequence is that of Photosystem II CP43 reaction center protein from Nuphar advena (Common spatterdock).